A 424-amino-acid polypeptide reads, in one-letter code: Serine incorporator 5 (424 aa).

Over 1–6 (MYALYF) the chain is Extracellular. A helical membrane pass occupies residues 7-23 (ILVVVLCCIMMSTTVAH). Residues 24–52 (KMKEHIPFFEDMCKGIKAGDTCEKLVGYS) lie on the Cytoplasmic side of the membrane. The helical transmembrane segment at 53 to 73 (AVYRVCFGMACFFFIFCLLTL) threads the bilayer. At 74 to 87 (KINNSKSCRAHIHN) the chain is on the extracellular side. The N-linked (GlcNAc...) asparagine glycan is linked to N76. A helical membrane pass occupies residues 88–108 (GFWFFKLLLLGAMCSGAFFIP). At 109 to 119 (DQDTFLNAWRY) the chain is on the cytoplasmic side. A helical membrane pass occupies residues 120–140 (VGAVGGFLFIGIQLLLLVEFA). Residues 141–161 (HKWNKNWTAGTASNKLWYASL) are Extracellular-facing. An N-linked (GlcNAc...) asparagine glycan is attached at N146. Residues 162–182 (ALVTLIMYSIATGGLVLMAVF) traverse the membrane as a helical segment. Topologically, residues 183 to 193 (YTQKDGCMENK) are cytoplasmic. A helical transmembrane segment spans residues 194–214 (ILLGVNGGLCVLISLVAISPC). The Extracellular portion of the chain corresponds to 215–221 (VQNRQPH). The helical transmembrane segment at 222–242 (SGLLQSGVISCYVTYLTFSAL) threads the bilayer. Residues 243–274 (SSKPAEVVLDEHGKNVTICVPDFGQDLYRDEN) are Cytoplasmic-facing. A helical membrane pass occupies residues 275 to 295 (LVTILGTSLLIGCILYSCLTS). Residues 296 to 348 (TTRSSSDALQGRYAAPELEIARCCFCFSPGGEDTEEQQQGKEGPRVIYDEKKG) lie on the Extracellular side of the membrane. The chain crosses the membrane as a helical span at residues 349–369 (TVYIYSYFHFVFFLASLYVMM). The Cytoplasmic portion of the chain corresponds to 370-391 (TVTNWFNYESANIESFFSGSWS). The chain crosses the membrane as a helical span at residues 392–412 (IFWVKMASCWICVLLYLCTLV). The Extracellular segment spans residues 413–424 (APLCCPTREFSV).

This sequence belongs to the TDE1 family.

It localises to the cell membrane. It catalyses the reaction a 1,2-diacyl-sn-glycero-3-phospho-L-serine(in) = a 1,2-diacyl-sn-glycero-3-phospho-L-serine(out). The catalysed reaction is a 1,2-diacyl-sn-glycero-3-phosphocholine(in) = a 1,2-diacyl-sn-glycero-3-phosphocholine(out). The enzyme catalyses a 1,2-diacyl-sn-glycero-3-phosphoethanolamine(in) = a 1,2-diacyl-sn-glycero-3-phosphoethanolamine(out). In terms of biological role, restriction factor required to restrict infectivity of gammaretroviruses: acts by inhibiting an early step of viral infection. Impairs the penetration of the viral particle into the cytoplasm. Non-ATP-dependent, non-specific lipid transporter for phosphatidylserine, phosphatidylcholine, and phosphatidylethanolamine. Functions as a scramblase that flips lipids in both directions across the membrane. Phospholipid scrambling results in gammaretroviral surface exposure of phosphatidylserine and loss of membrane asymmetry, which leads to loss of infectivity. Enhances the incorporation of serine into phosphatidylserine and sphingolipids. May play a role in providing serine molecules for the formation of myelin glycosphingolipids in oligodendrocytes. This chain is Serine incorporator 5 (SERINC5), found in Macaca fascicularis (Crab-eating macaque).